The chain runs to 46 residues: Mu-segestritoxin-Sf1d (46 aa).

4 cysteine pairs are disulfide-bonded: C3/C19, C10/C22, C18/C42, and C24/C40. A keys region for toxin activity region spans residues 31-33 (RPW).

Belongs to the neurotoxin 16 (SFI) family. As to expression, expressed by the venom gland.

It is found in the secreted. Functionally, insecticidal toxin. It inhibits insect voltage-gated sodium channels (Nav) by partially blocking the channel pore in DUM neurons from the American cockroach, not by acting as a gating modifier. The inhibition is only partially reversible after prolonged washout. In vivo, the toxin causes flaccid paralysis followed by death when injected into Heliothis virescens larvae. It also causes uncoordinated movements followed by full paralysis to sheep blowflies (Lucilia cuprina). When the toxin is fused to snowdrop lectin, it is orally active against larvae of the tomato moth (Laconobia oleracea), the rice brown planthopper (Nilaparvata lugens), and the peach-potato aphid (Myzus persicae). This Segestria florentina (Tube-web spider) protein is Mu-segestritoxin-Sf1d.